The primary structure comprises 400 residues: Argininosuccinate synthase (400 aa).

Residues Ala11–Ser19 and Ala38 contribute to the ATP site. Residues Tyr89 and Ser94 each contribute to the L-citrulline site. Gly119 lines the ATP pocket. L-aspartate-binding residues include Thr121, Asn125, and Asp126. Residue Asn125 coordinates L-citrulline. Positions 129, 179, 188, 264, and 276 each coordinate L-citrulline.

It belongs to the argininosuccinate synthase family. Type 1 subfamily. In terms of assembly, homotetramer.

The protein resides in the cytoplasm. The enzyme catalyses L-citrulline + L-aspartate + ATP = 2-(N(omega)-L-arginino)succinate + AMP + diphosphate + H(+). Its pathway is amino-acid biosynthesis; L-arginine biosynthesis; L-arginine from L-ornithine and carbamoyl phosphate: step 2/3. This chain is Argininosuccinate synthase, found in Oleidesulfovibrio alaskensis (strain ATCC BAA-1058 / DSM 17464 / G20) (Desulfovibrio alaskensis).